A 145-amino-acid polypeptide reads, in one-letter code: 3-dehydroquinate dehydratase (145 aa).

Tyr22 acts as the Proton acceptor in catalysis. Substrate contacts are provided by Asn71, His77, and Asp84. The active-site Proton donor is the His97. Substrate-binding positions include 98–99 (IS) and Arg108.

This sequence belongs to the type-II 3-dehydroquinase family. In terms of assembly, homododecamer.

It carries out the reaction 3-dehydroquinate = 3-dehydroshikimate + H2O. It participates in metabolic intermediate biosynthesis; chorismate biosynthesis; chorismate from D-erythrose 4-phosphate and phosphoenolpyruvate: step 3/7. Functionally, catalyzes a trans-dehydration via an enolate intermediate. The polypeptide is 3-dehydroquinate dehydratase (Exiguobacterium sp. (strain ATCC BAA-1283 / AT1b)).